Reading from the N-terminus, the 305-residue chain is Suppressor of activated egl-4 protein 2 (305 aa).

Residues 138 to 168 (KRGYESDSSDVSGVSHCSDAKRRRGRPRKDE) are disordered. Positions 158–170 (KRRRGRPRKDEEA) form a DNA-binding region, a.T hook.

In terms of assembly, interacts with phosphorylated egl-4. May interact with itself. May be a component of a histone deacetylase complex containing saeg-2, saeg-1 and hda-2. In terms of tissue distribution, ubiquitously expressed.

Its subcellular location is the nucleus. As a likely component of a histone deacetylase complex, together with saeg-1 and hda-2, functions downstream of the cAMP-dependent kinase egl-4 to regulate the expression of genes required for egg-laying and foraging. This Caenorhabditis elegans protein is Suppressor of activated egl-4 protein 2.